The primary structure comprises 683 residues: Dixin (683 aa).

A lipid anchor (N-myristoyl glycine) is attached at Leu-2. One can recognise a Calponin-homology (CH) domain in the interval 20–127 (EQQLQAYVAW…LVLALAAHFK (108 aa)). The interval 127–300 (KPGSSRTVNQ…LEKEMEEAKK (174 aa)) is actin-binding. Residue Ser-186 is modified to Phosphoserine. Residues 207–235 (GQQRSPSESSCSSLTSPSPIHSAKSESII) form a disordered region. Over residues 211–228 (SPSESSCSSLTSPSPIHS) the composition is skewed to low complexity. Position 231 is a phosphoserine (Ser-231). Residues 279-452 (SWEEQLLEQQ…EALRKLSDVS (174 aa)) are a coiled coil. Residues 482 to 492 (NYNSHNSQSNG) show a composition bias toward polar residues. Disordered stretches follow at residues 482–509 (NYNS…SNRG) and 556–594 (TQKK…QSSP). Ser-590 is modified (phosphoserine). In terms of domain architecture, DIX spans 600–680 (CTKVLYFTDR…KIVAWVEEDH (81 aa)).

The protein belongs to the DIXDC1 family. As to quaternary structure, isoform 1 but not isoform 2 binds filamentous actin. Interacts with the complex composed of DVL2 and Rac. Interacts with AXIN1; competes with MAP3K1. Interacts with MAP3K4 preventing MAP3K4 interaction with AXIN1. Directly interacts (via DIX domain) with DVL2 (via DIX domain). Interacts with gamma-tubulin. In terms of processing, phosphorylated on tyrosine and serine residues. Post-translationally, polyubiquitinated, leading to its proteasomal degradation. WNT3A signaling increases DIXDC1 protein levels by inhibiting its ubiquitination and subsequent degradation. Ubiquitously expressed with higher expression in cardiac and skeletal muscles.

Its subcellular location is the cell junction. It is found in the focal adhesion. It localises to the cytoplasm. The protein localises to the cytoskeleton. The protein resides in the stress fiber. Positive effector of the Wnt signaling pathway; activates WNT3A signaling via DVL2. Regulates JNK activation by AXIN1 and DVL2. This Homo sapiens (Human) protein is Dixin (DIXDC1).